We begin with the raw amino-acid sequence, 24 residues long: Protein YriA (24 aa).

The sequence is that of Protein YriA from Escherichia coli (strain K12).